Here is a 251-residue protein sequence, read N- to C-terminus: Zinc import ATP-binding protein ZnuC (251 aa).

The ABC transporter domain maps to 5 to 220; sequence VSLENVSVSF…PEFISMFGPR (216 aa). Position 37–44 (37–44) interacts with ATP; that stretch reads GPNGAGKS.

It belongs to the ABC transporter superfamily. Zinc importer (TC 3.A.1.15.5) family. As to quaternary structure, the complex is composed of two ATP-binding proteins (ZnuC), two transmembrane proteins (ZnuB) and a solute-binding protein (ZnuA).

The protein resides in the cell inner membrane. The enzyme catalyses Zn(2+)(out) + ATP(in) + H2O(in) = Zn(2+)(in) + ADP(in) + phosphate(in) + H(+)(in). Functionally, part of the ABC transporter complex ZnuABC involved in zinc import. Responsible for energy coupling to the transport system. Seems to be important for the virulence. This Salmonella typhimurium (strain LT2 / SGSC1412 / ATCC 700720) protein is Zinc import ATP-binding protein ZnuC.